The primary structure comprises 104 residues: ATP-dependent Clp protease adapter protein ClpS (104 aa).

The protein belongs to the ClpS family. In terms of assembly, binds to the N-terminal domain of the chaperone ClpA.

Involved in the modulation of the specificity of the ClpAP-mediated ATP-dependent protein degradation. This Desulforapulum autotrophicum (strain ATCC 43914 / DSM 3382 / VKM B-1955 / HRM2) (Desulfobacterium autotrophicum) protein is ATP-dependent Clp protease adapter protein ClpS.